The primary structure comprises 285 residues: Acetyl-coenzyme A carboxylase carboxyl transferase subunit beta (285 aa).

Residues 22–285 (LWTKCEACGA…HPGVAYAPGV (264 aa)) enclose the CoA carboxyltransferase N-terminal domain. Zn(2+) is bound by residues Cys26, Cys29, Cys45, and Cys48. The C4-type zinc finger occupies 26–48 (CEACGAQIYKKEFQENLHVCPKC).

The protein belongs to the AccD/PCCB family. As to quaternary structure, acetyl-CoA carboxylase is a heterohexamer composed of biotin carboxyl carrier protein (AccB), biotin carboxylase (AccC) and two subunits each of ACCase subunit alpha (AccA) and ACCase subunit beta (AccD). Requires Zn(2+) as cofactor.

The protein resides in the cytoplasm. It carries out the reaction N(6)-carboxybiotinyl-L-lysyl-[protein] + acetyl-CoA = N(6)-biotinyl-L-lysyl-[protein] + malonyl-CoA. The protein operates within lipid metabolism; malonyl-CoA biosynthesis; malonyl-CoA from acetyl-CoA: step 1/1. Component of the acetyl coenzyme A carboxylase (ACC) complex. Biotin carboxylase (BC) catalyzes the carboxylation of biotin on its carrier protein (BCCP) and then the CO(2) group is transferred by the transcarboxylase to acetyl-CoA to form malonyl-CoA. This chain is Acetyl-coenzyme A carboxylase carboxyl transferase subunit beta, found in Thermus thermophilus (strain ATCC BAA-163 / DSM 7039 / HB27).